Reading from the N-terminus, the 248-residue chain is 1-(5-phosphoribosyl)-5-[(5-phosphoribosylamino)methylideneamino] imidazole-4-carboxamide isomerase (248 aa).

Residue D8 is the Proton acceptor of the active site. The active-site Proton donor is D129.

It belongs to the HisA/HisF family.

It is found in the cytoplasm. The catalysed reaction is 1-(5-phospho-beta-D-ribosyl)-5-[(5-phospho-beta-D-ribosylamino)methylideneamino]imidazole-4-carboxamide = 5-[(5-phospho-1-deoxy-D-ribulos-1-ylimino)methylamino]-1-(5-phospho-beta-D-ribosyl)imidazole-4-carboxamide. It participates in amino-acid biosynthesis; L-histidine biosynthesis; L-histidine from 5-phospho-alpha-D-ribose 1-diphosphate: step 4/9. This is 1-(5-phosphoribosyl)-5-[(5-phosphoribosylamino)methylideneamino] imidazole-4-carboxamide isomerase from Desulfitobacterium hafniense (strain Y51).